A 272-amino-acid chain; its full sequence is GEM-like protein 5 (272 aa).

A disordered region spans residues 1–42 (MTGSQEDQPKIIIDQEQPKTLETEHQPEPSSSSPDQKKWGTH). Positions 16–27 (EQPKTLETEHQP) are enriched in basic and acidic residues. The GRAM domain maps to 143 to 221 (SLFRQIFGTE…ANVATVNPVV (79 aa)).

Belongs to the GEM family.

This chain is GEM-like protein 5, found in Arabidopsis thaliana (Mouse-ear cress).